Consider the following 414-residue polypeptide: Gamma-glutamyl phosphate reductase (414 aa).

It belongs to the gamma-glutamyl phosphate reductase family.

The protein resides in the cytoplasm. The enzyme catalyses L-glutamate 5-semialdehyde + phosphate + NADP(+) = L-glutamyl 5-phosphate + NADPH + H(+). It functions in the pathway amino-acid biosynthesis; L-proline biosynthesis; L-glutamate 5-semialdehyde from L-glutamate: step 2/2. In terms of biological role, catalyzes the NADPH-dependent reduction of L-glutamate 5-phosphate into L-glutamate 5-semialdehyde and phosphate. The product spontaneously undergoes cyclization to form 1-pyrroline-5-carboxylate. The sequence is that of Gamma-glutamyl phosphate reductase from Xanthomonas campestris pv. campestris (strain ATCC 33913 / DSM 3586 / NCPPB 528 / LMG 568 / P 25).